The primary structure comprises 368 residues: N-acetylneuraminate epimerase (368 aa).

The first 19 residues, 1–19 (MNKTITALAIMMASFAANA), serve as a signal peptide directing secretion. Kelch repeat units follow at residues 40–84 (TVYI…AFID), 86–137 (NLYV…FVHN), 139–173 (KAYVTGGVNQNIFNGYFEDLNEAGKDSATIDKINA), 174–219 (HYFD…VNKG), 222–265 (TWLI…VAGG), 287–336 (ENYQ…PWNN), and 338–367 (LLIIGGETAGGKAVTDSVLISVKDNKVTVQ). Glu-228 functions as the Proton acceptor in the catalytic mechanism.

The protein belongs to the NanM family. As to quaternary structure, homodimer.

It is found in the periplasm. It catalyses the reaction N-acetyl-alpha-neuraminate = N-acetyl-beta-neuraminate. Its function is as follows. Converts alpha-N-acetylneuranimic acid (Neu5Ac) to the beta-anomer, accelerating the equilibrium between the alpha- and beta-anomers. Probably facilitates sialidase-negative bacteria to compete successfully for limited amounts of extracellular Neu5Ac, which is likely taken up in the beta-anomer. In addition, the rapid removal of sialic acid from solution might be advantageous to the bacterium to damp down host responses. The chain is N-acetylneuraminate epimerase from Escherichia coli O9:H4 (strain HS).